The following is a 74-amino-acid chain: Cytochrome c oxidase subunit 3 (74 aa).

The next 2 helical transmembrane spans lie at 15–37 (SPWP…KWFH) and 42–59 (SLFL…YQWW).

It belongs to the cytochrome c oxidase subunit 3 family. As to quaternary structure, component of the cytochrome c oxidase (complex IV, CIV), a multisubunit enzyme composed of a catalytic core of 3 subunits and several supernumerary subunits. The complex exists as a monomer or a dimer and forms supercomplexes (SCs) in the inner mitochondrial membrane with ubiquinol-cytochrome c oxidoreductase (cytochrome b-c1 complex, complex III, CIII).

It localises to the mitochondrion inner membrane. The enzyme catalyses 4 Fe(II)-[cytochrome c] + O2 + 8 H(+)(in) = 4 Fe(III)-[cytochrome c] + 2 H2O + 4 H(+)(out). In terms of biological role, component of the cytochrome c oxidase, the last enzyme in the mitochondrial electron transport chain which drives oxidative phosphorylation. The respiratory chain contains 3 multisubunit complexes succinate dehydrogenase (complex II, CII), ubiquinol-cytochrome c oxidoreductase (cytochrome b-c1 complex, complex III, CIII) and cytochrome c oxidase (complex IV, CIV), that cooperate to transfer electrons derived from NADH and succinate to molecular oxygen, creating an electrochemical gradient over the inner membrane that drives transmembrane transport and the ATP synthase. Cytochrome c oxidase is the component of the respiratory chain that catalyzes the reduction of oxygen to water. Electrons originating from reduced cytochrome c in the intermembrane space (IMS) are transferred via the dinuclear copper A center (CU(A)) of subunit 2 and heme A of subunit 1 to the active site in subunit 1, a binuclear center (BNC) formed by heme A3 and copper B (CU(B)). The BNC reduces molecular oxygen to 2 water molecules using 4 electrons from cytochrome c in the IMS and 4 protons from the mitochondrial matrix. The protein is Cytochrome c oxidase subunit 3 (mt:CoIII) of Drosophila simulans (Fruit fly).